The following is a 691-amino-acid chain: MLRGQEERKYSIRKYSIGVVSVLAATMFVVSSHEAQASEKTPTSNAAAQKETLNQPGEQGNAITSHQMQSGKQLDDMHKENGKSGTVTEGKDTLQSSKHQSTQNSKTIRTQNDNQVKQDSERQGSKQSHQNNATNNTERQNDQVQNTHHAERNGSQSTTSQSNDVDKSQPSIPAQKVLPNHDKAAPTSTTPPSNDKTAPKSTKAQDATTDKHPNQQDTHQPAHQIIDAKQDDTVRQSEQKPQVGDLSKHIDGQNSPEKPTDKNTDNKQLIKDALQAPKTRSTTNAAADAKKVRPLKANQVQPLNKYPVVFVHGFLGLVGDNAPALYPNYWGGNKFKVIEELRKQGYNVHQASVSAFGSNYDRAVELYYYIKGGRVDYGAAHAAKYGHERYGKTYKGIMPNWEPGKKVHLVGHSMGGQTIRLMEEFLRNGNKEEIAYHKAHGGEISPLFTGGHNNMVASITTLATPHNGSQAADKFGNTEAVRKIMFALNRFMGNKYSNIDLGLTQWGFKQLPNESYIDYIKRVSKSKIWTSDDNAAYDLTLDGSAKLNNMTSMNPNITYTTYTGVSSHTGPLGYENPDLGTFFLMDTTSRIIGHDAREEWRKNDGVVPVISSLHPSNQPFINVTNDEPATRRGIWQVKPIIQGWDHVDFIGVDFLDFKRKGAELANFYTGIINDLLRVEATESKGTQLKAS.

The signal sequence occupies residues 1-37; the sequence is MLRGQEERKYSIRKYSIGVVSVLAATMFVVSSHEAQA. A compositionally biased stretch (polar residues) spans 34–72; the sequence is EAQASEKTPTSNAAAQKETLNQPGEQGNAITSHQMQSGK. The interval 34–267 is disordered; it reads EAQASEKTPT…KPTDKNTDNK (234 aa). The propeptide occupies 38–296; that stretch reads SEKTPTSNAA…ADAKKVRPLK (259 aa). Positions 73–82 are enriched in basic and acidic residues; the sequence is QLDDMHKENG. 3 stretches are compositionally biased toward polar residues: residues 83-115, 125-172, and 186-207; these read KSGT…NDNQ, SKQS…QPSI, and PTST…AQDA. 2 stretches are compositionally biased toward basic and acidic residues: residues 226-238 and 258-267; these read IDAK…RQSE and KPTDKNTDNK. Ser-413 acts as the Nucleophile in catalysis. Gly-580 is a binding site for Ca(2+). Asp-604 serves as the catalytic Charge relay system. Residue Asp-645 coordinates Ca(2+). His-646 functions as the Charge relay system in the catalytic mechanism. Ca(2+) is bound by residues Asp-648, Asp-653, and Asp-656.

Belongs to the AB hydrolase superfamily. Lipase family.

The protein localises to the secreted. The catalysed reaction is a triacylglycerol + H2O = a diacylglycerol + a fatty acid + H(+). In Staphylococcus aureus (strain Mu50 / ATCC 700699), this protein is Lipase 2 (lip2).